A 315-amino-acid chain; its full sequence is MEPGAWGNRTAVTDFILLGLTGNVRLQPILFVVFFFAYIVTVGGNLSILAAIFVEPKLHTPMYYFLGNLSLLDIGCISVTVPPMLVCLLAHECRVPYAACISQLFFFHLLAGVDCHLLTAMAYDRYLAICQPLTYSTRMSREVQGTLVGICCTVSFINALTHTVAVSVLDFCGPNVVNHFYCDLPPLFQLSCSSIYLNGQLLFVGATFMGVVPMILISVSYAHVAAAVLRIRSTEGRKKAFSTCGSHLTVVCIFYGTGFFSYMRLGSVSASDKDKGIGILNTILSPMLNPLIYSLRNPDVQGALKRVLTGKRYPV.

At 1 to 28 the chain is on the extracellular side; it reads MEPGAWGNRTAVTDFILLGLTGNVRLQP. N-linked (GlcNAc...) asparagine glycosylation is present at asparagine 8. Residues 29 to 49 form a helical membrane-spanning segment; sequence ILFVVFFFAYIVTVGGNLSIL. Over 50–68 the chain is Cytoplasmic; the sequence is AAIFVEPKLHTPMYYFLGN. Residues 69–89 traverse the membrane as a helical segment; it reads LSLLDIGCISVTVPPMLVCLL. The Extracellular portion of the chain corresponds to 90–97; it reads AHECRVPY. A helical transmembrane segment spans residues 98-118; that stretch reads AACISQLFFFHLLAGVDCHLL. Cysteine 100 and cysteine 192 form a disulfide bridge. Residues 119–145 lie on the Cytoplasmic side of the membrane; sequence TAMAYDRYLAICQPLTYSTRMSREVQG. The helical transmembrane segment at 146–166 threads the bilayer; the sequence is TLVGICCTVSFINALTHTVAV. Residues 167 to 200 are Extracellular-facing; it reads SVLDFCGPNVVNHFYCDLPPLFQLSCSSIYLNGQ. Residues 201–221 form a helical membrane-spanning segment; the sequence is LLFVGATFMGVVPMILISVSY. The Cytoplasmic portion of the chain corresponds to 222–239; the sequence is AHVAAAVLRIRSTEGRKK. A helical membrane pass occupies residues 240-260; that stretch reads AFSTCGSHLTVVCIFYGTGFF. Residues 261-274 lie on the Extracellular side of the membrane; that stretch reads SYMRLGSVSASDKD. A helical transmembrane segment spans residues 275-295; that stretch reads KGIGILNTILSPMLNPLIYSL. Topologically, residues 296–315 are cytoplasmic; the sequence is RNPDVQGALKRVLTGKRYPV.

Belongs to the G-protein coupled receptor 1 family.

Its subcellular location is the cell membrane. Its function is as follows. Odorant receptor. The sequence is that of Olfactory receptor 3A10 from Mus musculus (Mouse).